The sequence spans 1111 residues: Isoleucine--tRNA ligase (1111 aa).

A 'HIGH' region motif is present at residues 52–62 (PFANGLPHYGH). The 'KMSKS' region signature appears at 645-649 (KLSKR). ATP is bound at residue Lys648.

Belongs to the class-I aminoacyl-tRNA synthetase family. IleS type 2 subfamily. Monomer. Requires Zn(2+) as cofactor.

The protein localises to the cytoplasm. The catalysed reaction is tRNA(Ile) + L-isoleucine + ATP = L-isoleucyl-tRNA(Ile) + AMP + diphosphate. Catalyzes the attachment of isoleucine to tRNA(Ile). As IleRS can inadvertently accommodate and process structurally similar amino acids such as valine, to avoid such errors it has two additional distinct tRNA(Ile)-dependent editing activities. One activity is designated as 'pretransfer' editing and involves the hydrolysis of activated Val-AMP. The other activity is designated 'posttransfer' editing and involves deacylation of mischarged Val-tRNA(Ile). The protein is Isoleucine--tRNA ligase of Wolbachia pipientis wMel.